Reading from the N-terminus, the 363-residue chain is Histidinol-phosphate aminotransferase (363 aa).

Lys220 carries the N6-(pyridoxal phosphate)lysine modification.

It belongs to the class-II pyridoxal-phosphate-dependent aminotransferase family. Histidinol-phosphate aminotransferase subfamily. In terms of assembly, homodimer. Pyridoxal 5'-phosphate serves as cofactor.

The catalysed reaction is L-histidinol phosphate + 2-oxoglutarate = 3-(imidazol-4-yl)-2-oxopropyl phosphate + L-glutamate. The protein operates within amino-acid biosynthesis; L-histidine biosynthesis; L-histidine from 5-phospho-alpha-D-ribose 1-diphosphate: step 7/9. The protein is Histidinol-phosphate aminotransferase of Paramagnetospirillum magneticum (strain ATCC 700264 / AMB-1) (Magnetospirillum magneticum).